Consider the following 470-residue polypeptide: 6-phospho-beta-galactosidase (470 aa).

D-galactose 6-phosphate is bound by residues Gln-19, His-116, Asn-159, Glu-160, and Asn-297. The active-site Proton donor is the Glu-160. Glu-375 acts as the Nucleophile in catalysis. Residues Ser-430, Trp-431, Lys-437, and Tyr-439 each contribute to the D-galactose 6-phosphate site.

It belongs to the glycosyl hydrolase 1 family.

The catalysed reaction is a 6-phospho-beta-D-galactoside + H2O = D-galactose 6-phosphate + an alcohol. It functions in the pathway carbohydrate metabolism; lactose degradation; D-galactose 6-phosphate and beta-D-glucose from lactose 6-phosphate: step 1/1. This chain is 6-phospho-beta-galactosidase, found in Staphylococcus epidermidis (strain ATCC 35984 / DSM 28319 / BCRC 17069 / CCUG 31568 / BM 3577 / RP62A).